Consider the following 1085-residue polypeptide: Extracellular calcium-sensing receptor (1085 aa).

Residues 1-19 form the signal peptide; sequence MALYSCCWILLAFSTWCTS. Residues 20-611 lie on the Extracellular side of the membrane; that stretch reads AYGPDQRAQK…KEIEFLSWTE (592 aa). The interval 23 to 189 is ligand-binding 1 (LB1); it reads PDQRAQKKGD…QFKSFLRTIP (167 aa). A disulfide bridge links Cys61 with Cys102. Position 67–71 (67–71) interacts with phosphate; that stretch reads RGFRW. The Ca(2+) site is built by Ile82, Ser85, Leu88, and Leu89. N-linked (GlcNAc...) asparagine glycosylation occurs at Asn91. Thr101 serves as a coordination point for Ca(2+). A glycan (N-linked (GlcNAc...) asparagine) is linked at Asn131. Position 146 (Thr146) interacts with Ca(2+). Residues Ser148, Ala169, and Ser171 each coordinate L-tryptophan. Ca(2+) is bound by residues Ser171, Pro189, Asp191, Glu232, and Asp235. Residues 190 to 325 form a ligand-binding 2 (LB2) region; the sequence is NDEHQATAMA…GGTIGFGLKA (136 aa). Disulfide bonds link Cys237–Cys562, Cys359–Cys396, Cys438–Cys450, Cys543–Cys563, Cys547–Cys566, Cys569–Cys583, and Cys586–Cys599. Positions 239 and 241 each coordinate spermine. 2 N-linked (GlcNAc...) asparagine glycosylation sites follow: Asn262 and Asn288. Glu298 serves as a coordination point for Ca(2+). Glu298 serves as a coordination point for L-tryptophan. N-linked (GlcNAc...) asparagine glycosylation is present at Asn401. 416-418 contributes to the phosphate binding site; that stretch reads RIS. N-linked (GlcNAc...) asparagine glycosylation is found at Asn447, Asn469, and Asn489. Tyr490 serves as a coordination point for Ca(2+). An N-linked (GlcNAc...) asparagine glycan is attached at Asn542. The cysteine-rich (CR) stretch occupies residues 543–613; the sequence is CSRDCLAGTR…IEFLSWTEPF (71 aa). Gly558 lines the Ca(2+) pocket. Asn595 carries an N-linked (GlcNAc...) asparagine glycan. A helical transmembrane segment spans residues 612–637; it reads PFGIALTLFAVLGIFLTAFVLGVFIK. The Cytoplasmic segment spans residues 638-649; sequence FRNTPIVKATNR. Positions 638 to 649 are intracellular loop 1 (ICL1); it reads FRNTPIVKATNR. Residues 650–669 form a helical membrane-spanning segment; it reads ELSYLLLFSLLCCFSSSLFF. At 670 to 675 the chain is on the extracellular side; sequence IGEPQD. The helical transmembrane segment at 676–699 threads the bilayer; that stretch reads WTCRLRQPAFGISFVLCISCILVK. At 700-723 the chain is on the cytoplasmic side; it reads TNRVLLVFEAKIPTSFHRKWWGLN. The segment at 700-723 is intracellular loop 2 (ICL2); the sequence is TNRVLLVFEAKIPTSFHRKWWGLN. The chain crosses the membrane as a helical span at residues 724 to 746; the sequence is LQFLLVFLCTFMQIVICAIWLNT. At 747–770 the chain is on the extracellular side; the sequence is APPSSYRNHELEDEIIFITCHEGS. The helical transmembrane segment at 771–790 threads the bilayer; that stretch reads LMALGFLIGYTCLLAAICFF. Topologically, residues 791–806 are cytoplasmic; the sequence is FAFKSRKLPENFNEAK. An intracellular loop 3 (ICL3) region spans residues 791–806; that stretch reads FAFKSRKLPENFNEAK. A helical transmembrane segment spans residues 807 to 829; it reads FITFSMLIFFIVWISFIPAYAST. The Extracellular portion of the chain corresponds to 830–833; it reads YGKF. The chain crosses the membrane as a helical span at residues 834–855; the sequence is VSAVEVIAILAASFGLLACIFF. The Cytoplasmic portion of the chain corresponds to 856-1085; the sequence is NKVYIILFKP…STVTENMLRS (230 aa). The segment at 856 to 1085 is C-terminus; it reads NKVYIILFKP…STVTENMLRS (230 aa). Residues 881-901 are interaction with RNF19A; that stretch reads AFKVAARATLRRSNVSRQRSS. Thr889 is modified (phosphothreonine). The segment at 891–899 is arginine-rich retention motif; the sequence is RRSNVSRQR. 3 positions are modified to phosphoserine: Ser893, Ser900, and Ser921. Over residues 893 to 938 the composition is skewed to low complexity; the sequence is SNVSRQRSSSLGGSTGSTPSSSISSKSNSEDPFPQQQPKRQKQPQP. Disordered regions lie at residues 893–969 and 1034–1058; these read SNVS…PPRC and SQETGLQGPVGEDHQLEMEDPEEMS. Residues 950–960 are compositionally biased toward pro residues; that stretch reads QPRPPSTPQPQ. The residue at position 1068 (Ser1068) is a Phosphoserine.

Belongs to the G-protein coupled receptor 3 family. Homodimer; disulfide-linked. Interacts with VCP. Interacts with ARRB1. In terms of processing, phosphorylation at Thr-889 by PKC impairs coupling with G(q)/G(11) G-proteins, while it does not affect G(i)/G(o)-coupling. Phosphorylation at Ser-893 by PKC and Ser-900 by PKA promote plasma membrane localization. Ubiquitinated by RNF19A; which induces proteasomal degradation.

The protein localises to the cell membrane. In resting state, adopts an open conformation, anion-binding promoting the inactive configuration. Upon aromatic amino acid-binding, the groove in the extracellular venus flytrap module is closed, thereby inducing the formation of a novel homodimer interface between subunits. Calcium ions stabilize the active state by enhancing homodimer interactions between membrane-proximal domains to fully activate the receptor. Upon activation, the homodimer adopts an asymmetric configuration of the 7-transmembrane region that primes one protomer for G-protein coupling. G-protein binding expands the transmembrane dimer interface; the restriction imposed by the receptor dimer, in combination with intracellular loop 2 (ICL2), enables G-protein activation by facilitating conformational transition of G-protein alpha. Coupling to different classes of G-proteins results in distinct CASR-G-protein interfaces. Its function is as follows. G-protein-coupled receptor that senses changes in the extracellular concentration of calcium ions and plays a key role in maintaining calcium homeostasis. Senses fluctuations in the circulating calcium concentration: activated by elevated circulating calcium, leading to decreased parathyroid hormone (PTH) secretion in parathyroid glands. In kidneys, acts as a key regulator of renal tubular calcium resorption. Ligand binding causes a conformation change that triggers signaling via guanine nucleotide-binding proteins (G-proteins) and modulates the activity of downstream effectors. CASR is coupled with different G(q)/G(11), G(i)/G(o)- or G(s)-classes of G-proteins depending on the context. In the parathyroid and kidney, CASR signals through G(q)/G(11) and G(i)/G(o) G-proteins: G(q)/G(11) coupling activates phospholipase C-beta, releasing diacylglycerol (DAG) and inositol 1,4,5-trisphosphate (IP3) second messengers, while G(i)/G(o) coupling mediates inhibition of adenylate cyclase activity. The G-protein-coupled receptor activity is activated by a co-agonist mechanism: aromatic amino acids, such as Trp or Phe, act concertedly with divalent cations, such as calcium or magnesium, to achieve full receptor activation. Acts as an activator of the NLRP3 inflammasome via G(i)/G(o)-mediated signaling: down-regulation of cyclic AMP (cAMP) relieving NLRP3 inhibition by cAMP. Acts as a regulator of proton-sensing receptor GPR68 in a seesaw manner: CASR-mediated signaling inhibits GPR68 signaling in response to extracellular calcium, while GPR68 inhibits CASR in presence of extracellular protons. In Bos taurus (Bovine), this protein is Extracellular calcium-sensing receptor (CASR).